The chain runs to 167 residues: MLFLDDAKMKNFTSCFKEKDFLKFFFNRLRLNKTSRYESEFPYISLCGRERNFIRCDDTPVVFTEQLRKDDTEVLSYAHAGQVLTLPYEPHKLYMDPRNGRVYHPAAPQVGGIGLVRSKLAIELSQHFEFLAGEASPTHFQWNGERLELQNEWVNNTQRFPMNEDCK.

Belongs to the UPF0598 family.

The protein is UPF0598 protein CG30010 of Drosophila melanogaster (Fruit fly).